The sequence spans 530 residues: Chaperone Ric-8A (530 aa).

Ser-435 carries the post-translational modification Phosphoserine. Phosphothreonine occurs at positions 440 and 442. 4 positions are modified to phosphoserine: Ser-501, Ser-522, Ser-523, and Ser-527.

This sequence belongs to the synembryn family. As to quaternary structure, interacts with GDP-bound G alpha proteins GNAI1, GNAO1 and GNAQ, and with GNA13 with lower affinity. Does not interact with G-alpha proteins when they are in complex with subunits beta and gamma. Interacts (via C-terminus) with RGS14; the interaction stimulates the dissociation of the complex between RGS14 and the active GTP-bound form of GNAI1. Interacts with NCS1; interaction is favored in the absence of Ca(2+) and myristoylation of NCS1 is not required. Phosphorylated at Ser-435 and Thr-440 by CK2, stabilizing its interface with G alpha proteins.

The protein localises to the cytoplasm. Its subcellular location is the cell cortex. Chaperone that specifically binds and folds nascent G alpha proteins prior to G protein heterotrimer formation, promoting their stability and activity: folds GNAI1, GNAO1, GNA13 and GNAQ. Does not fold G(s) G-alpha proteins GNAS nor GNAL. Also acts as a guanine nucleotide exchange factor (GEF) for G alpha proteins by stimulating exchange of bound GDP for free GTP. Involved in regulation of microtubule pulling forces during mitotic movement of chromosomes by stimulating G(i)-alpha protein (GNAI1), possibly leading to release G(i)-alpha-GTP and NuMA proteins from the NuMA-GPSM2-G(i)-alpha-GDP complex. Also acts as an activator for G(q)-alpha (GNAQ) protein by enhancing the G(q)-coupled receptor-mediated ERK activation. The chain is Chaperone Ric-8A (RIC8A) from Bos taurus (Bovine).